A 209-amino-acid chain; its full sequence is Uracil phosphoribosyltransferase (209 aa).

Residues Arg-79, Arg-104, and 131–139 (DPMLATGNS) each bind 5-phospho-alpha-D-ribose 1-diphosphate. Uracil contacts are provided by residues Ile-194 and 199–201 (GDA). Asp-200 serves as a coordination point for 5-phospho-alpha-D-ribose 1-diphosphate.

This sequence belongs to the UPRTase family. The cofactor is Mg(2+).

It catalyses the reaction UMP + diphosphate = 5-phospho-alpha-D-ribose 1-diphosphate + uracil. It functions in the pathway pyrimidine metabolism; UMP biosynthesis via salvage pathway; UMP from uracil: step 1/1. Its activity is regulated as follows. Allosterically activated by GTP. Its function is as follows. Catalyzes the conversion of uracil and 5-phospho-alpha-D-ribose 1-diphosphate (PRPP) to UMP and diphosphate. The polypeptide is Uracil phosphoribosyltransferase (Agrobacterium fabrum (strain C58 / ATCC 33970) (Agrobacterium tumefaciens (strain C58))).